A 471-amino-acid polypeptide reads, in one-letter code: tRNA-2-methylthio-N(6)-dimethylallyladenosine synthase (471 aa).

Residues 29–146 (KKFHIKTYGC…LPELIAKVNR (118 aa)) enclose the MTTase N-terminal domain. [4Fe-4S] cluster-binding residues include Cys38, Cys74, Cys109, Cys187, Cys191, and Cys194. Residues 173-405 (RVPQSSAFLS…QQLLKEKQLE (233 aa)) form the Radical SAM core domain. Residues 408-467 (KKMIGKTVTVLFDKKHPDKISGRTEYMQQVFSDDSNLLDKIVTMRVEDASTFTLKCTAED) form the TRAM domain.

The protein belongs to the methylthiotransferase family. MiaB subfamily. Monomer. The cofactor is [4Fe-4S] cluster.

The protein localises to the cytoplasm. The enzyme catalyses N(6)-dimethylallyladenosine(37) in tRNA + (sulfur carrier)-SH + AH2 + 2 S-adenosyl-L-methionine = 2-methylsulfanyl-N(6)-dimethylallyladenosine(37) in tRNA + (sulfur carrier)-H + 5'-deoxyadenosine + L-methionine + A + S-adenosyl-L-homocysteine + 2 H(+). Catalyzes the methylthiolation of N6-(dimethylallyl)adenosine (i(6)A), leading to the formation of 2-methylthio-N6-(dimethylallyl)adenosine (ms(2)i(6)A) at position 37 in tRNAs that read codons beginning with uridine. The sequence is that of tRNA-2-methylthio-N(6)-dimethylallyladenosine synthase from Neorickettsia sennetsu (strain ATCC VR-367 / Miyayama) (Ehrlichia sennetsu).